We begin with the raw amino-acid sequence, 359 residues long: Phospho-N-acetylmuramoyl-pentapeptide-transferase (359 aa).

10 helical membrane-spanning segments follow: residues 26 to 46, 75 to 95, 97 to 117, 134 to 154, 166 to 186, 197 to 217, 233 to 253, 261 to 281, 286 to 306, and 336 to 356; these read TIYA…WLIR, GGVL…NLTI, YVWL…ADDY, LACE…KPGF, VLPD…VGAA, GLAI…AYFA, GVGE…GFLW, VFMG…LAIV, ILLA…IFQV, and KVIV…ISTL.

The protein belongs to the glycosyltransferase 4 family. MraY subfamily. It depends on Mg(2+) as a cofactor.

It localises to the cell inner membrane. The enzyme catalyses UDP-N-acetyl-alpha-D-muramoyl-L-alanyl-gamma-D-glutamyl-meso-2,6-diaminopimeloyl-D-alanyl-D-alanine + di-trans,octa-cis-undecaprenyl phosphate = di-trans,octa-cis-undecaprenyl diphospho-N-acetyl-alpha-D-muramoyl-L-alanyl-D-glutamyl-meso-2,6-diaminopimeloyl-D-alanyl-D-alanine + UMP. Its pathway is cell wall biogenesis; peptidoglycan biosynthesis. Functionally, catalyzes the initial step of the lipid cycle reactions in the biosynthesis of the cell wall peptidoglycan: transfers peptidoglycan precursor phospho-MurNAc-pentapeptide from UDP-MurNAc-pentapeptide onto the lipid carrier undecaprenyl phosphate, yielding undecaprenyl-pyrophosphoryl-MurNAc-pentapeptide, known as lipid I. The protein is Phospho-N-acetylmuramoyl-pentapeptide-transferase of Syntrophus aciditrophicus (strain SB).